We begin with the raw amino-acid sequence, 404 residues long: Metacaspase-1A (404 aa).

The segment covering Met-1 to Ser-10 has biased composition (basic residues). A disordered region spans residues Met-1–Gly-100. The segment covering Gln-24–Gly-51 has biased composition (low complexity). Catalysis depends on residues His-200 and Cys-256.

Belongs to the peptidase C14B family.

Involved in cell death (apoptosis). The chain is Metacaspase-1A (casA) from Aspergillus niger (strain ATCC MYA-4892 / CBS 513.88 / FGSC A1513).